The sequence spans 181 residues: Oligoribonuclease (181 aa).

An Exonuclease domain is found at 8–171 (LIWIDLEMTG…LDIQESIAEL (164 aa)). Residue Tyr129 is part of the active site.

The protein belongs to the oligoribonuclease family.

It is found in the cytoplasm. In terms of biological role, 3'-to-5' exoribonuclease specific for small oligoribonucleotides. The chain is Oligoribonuclease from Shewanella amazonensis (strain ATCC BAA-1098 / SB2B).